A 348-amino-acid chain; its full sequence is tRNA N6-adenosine threonylcarbamoyltransferase (348 aa).

Residues H116 and H120 each contribute to the Fe cation site. Substrate contacts are provided by residues 138–142, D171, G184, and N282; that span reads IISGG. Residue D310 participates in Fe cation binding.

Belongs to the KAE1 / TsaD family. Requires Fe(2+) as cofactor.

It is found in the cytoplasm. It carries out the reaction L-threonylcarbamoyladenylate + adenosine(37) in tRNA = N(6)-L-threonylcarbamoyladenosine(37) in tRNA + AMP + H(+). In terms of biological role, required for the formation of a threonylcarbamoyl group on adenosine at position 37 (t(6)A37) in tRNAs that read codons beginning with adenine. Is involved in the transfer of the threonylcarbamoyl moiety of threonylcarbamoyl-AMP (TC-AMP) to the N6 group of A37, together with TsaE and TsaB. TsaD likely plays a direct catalytic role in this reaction. In Ehrlichia ruminantium (strain Welgevonden), this protein is tRNA N6-adenosine threonylcarbamoyltransferase.